The sequence spans 415 residues: Peptide chain release factor subunit 1 (415 aa).

It belongs to the eukaryotic release factor 1 family. As to quaternary structure, heterodimer of two subunits, one of which binds GTP.

It localises to the cytoplasm. Functionally, directs the termination of nascent peptide synthesis (translation) in response to the termination codons UAA, UAG and UGA. The protein is Peptide chain release factor subunit 1 of Methanosarcina mazei (strain ATCC BAA-159 / DSM 3647 / Goe1 / Go1 / JCM 11833 / OCM 88) (Methanosarcina frisia).